Here is a 238-residue protein sequence, read N- to C-terminus: Histidine/lysine/arginine/ornithine transport system permease protein HisM (238 aa).

At 1–26 the chain is on the periplasmic side; that stretch reads MIEILHEYWKPLLWTDGYRFTGVAIT. An ABC transmembrane type-1 domain is found at 23–221; the sequence is VAITLWLLIL…IISYVLISLF (199 aa). The chain crosses the membrane as a helical span at residues 27 to 47; it reads LWLLILSVVIGGVLALFLAIG. Residues 48-58 are Cytoplasmic-facing; the sequence is RVSSNKYIQFP. A helical membrane pass occupies residues 59-79; that stretch reads IWLFTYIFRGTPLYVQLLVFY. Residues 80–104 lie on the Periplasmic side of the membrane; sequence SGMYTLEIVKGTEFLNAFFRSGLNC. The chain crosses the membrane as a helical span at residues 105 to 125; sequence TVLALTLNTCAYTTEIFAGAI. Topologically, residues 126-157 are cytoplasmic; it reads RSVPHGEIEAARAYGFSTFKMYRCIILPSALR. Residues 158-178 form a helical membrane-spanning segment; the sequence is IALPAYSNEVILMLHSTALAF. The Periplasmic segment spans residues 179-199; the sequence is TATVPDLLKIARDINAATYQP. The chain crosses the membrane as a helical span at residues 200–220; that stretch reads FTAFGIAAVLYLIISYVLISL. At 221 to 238 the chain is on the cytoplasmic side; it reads FRRAEKRWLQHVKPSSTH.

Belongs to the binding-protein-dependent transport system permease family. HisMQ subfamily. As to quaternary structure, the HisPMQJ complex is composed of two ATP-binding proteins (HisP), two transmembrane proteins (HisM and HisQ) and a solute-binding protein (HisJ). The HisPMQ-ArgT complex is composed of two ATP-binding proteins (HisP), two transmembrane proteins (HisM and HisQ) and a solute-binding protein (ArgT).

It localises to the cell inner membrane. Functionally, part of the ABC transporter complex HisPMQJ involved in histidine transport. Is also part of the ABC transporter complex HisPMQ-ArgT involved in lysine/arginine/ornithine transport. Probably responsible for the translocation of the substrate across the membrane. In Escherichia coli O157:H7, this protein is Histidine/lysine/arginine/ornithine transport system permease protein HisM (hisM).